Reading from the N-terminus, the 184-residue chain is Protein PPLZ12 (184 aa).

The sequence is that of Protein PPLZ12 (PPLZ12) from Lupinus polyphyllus (Large-leaved lupine).